We begin with the raw amino-acid sequence, 335 residues long: tRNA methyltransferase 10 homolog A (335 aa).

Disordered regions lie at residues 1–91 and 279–335; these read MSSE…DRKR and VPAH…PDPQ. A phosphoserine mark is found at S22 and S24. Over residues 52–62 the composition is skewed to basic and acidic residues; the sequence is RLWEEQREQRK. Positions 52 to 84 form a coiled coil; sequence RLWEEQREQRKEKRKEKRKRKKLERRCQLESNS. The segment covering 63–75 has biased composition (basic residues); the sequence is EKRKEKRKRKKLE. In terms of domain architecture, SAM-dependent MTase TRM10-type spans 88–279; sequence DRKRIRRHVA…TILPPRKGAV (192 aa). A compositionally biased stretch (basic and acidic residues) spans 304–319; the sequence is EGEHGRDDPGSPHKEQ. Residues 320–335 show a composition bias toward low complexity; that stretch reads QGQQSSSVSAVSPDPQ. Phosphoserine is present on S331.

It belongs to the class IV-like SAM-binding methyltransferase superfamily. TRM10 family. In terms of assembly, interacts with tRNA. In terms of tissue distribution, ubiquitously expressed. Is more abundant in brain and pancreatic islets compared to other tissues (at protein level).

It is found in the nucleus. The protein localises to the nucleolus. It carries out the reaction guanosine(9) in tRNA + S-adenosyl-L-methionine = N(1)-methylguanosine(9) in tRNA + S-adenosyl-L-homocysteine + H(+). In terms of biological role, S-adenosyl-L-methionine-dependent guanine N(1)-methyltransferase that catalyzes the formation of N(1)-methylguanine at position 9 (m1G9) in tRNAs. Probably not able to catalyze formation of N(1)-methyladenine at position 9 (m1A9) in tRNAs. The sequence is that of tRNA methyltransferase 10 homolog A (Trmt10a) from Rattus norvegicus (Rat).